The primary structure comprises 26 residues: Omega-conotoxin TVIA (26 aa).

3 disulfide bridges follow: cysteine 1–cysteine 16, cysteine 8–cysteine 19, and cysteine 15–cysteine 26. Residues proline 4, proline 10, and proline 21 each carry the 4-hydroxyproline modification.

Belongs to the conotoxin O1 superfamily. Expressed by the venom duct.

It is found in the secreted. Functionally, omega-conotoxins act at presynaptic membranes, they bind and block voltage-gated calcium channels (Cav). This Conus tulipa (Fish-hunting cone snail) protein is Omega-conotoxin TVIA.